The primary structure comprises 714 residues: Phosphate acetyltransferase (714 aa).

The segment at 391 to 714 (AFRYQLTELA…LTAIQSAQQQ (324 aa)) is phosphate acetyltransferase.

The protein in the N-terminal section; belongs to the CobB/CobQ family. In the C-terminal section; belongs to the phosphate acetyltransferase and butyryltransferase family. In terms of assembly, homohexamer.

Its subcellular location is the cytoplasm. It catalyses the reaction acetyl-CoA + phosphate = acetyl phosphate + CoA. It functions in the pathway metabolic intermediate biosynthesis; acetyl-CoA biosynthesis; acetyl-CoA from acetate: step 2/2. Inhibited by NADH and ATP. Pyruvate and PEP act as activators of the acetyl phosphate forming reaction while inhibiting the formation of acetyl-CoA. Functionally, involved in acetate metabolism. Catalyzes the reversible interconversion of acetyl-CoA and acetyl phosphate. The direction of the overall reaction changes depending on growth conditions. On minimal medium acetyl-CoA is generated. In rich medium acetyl-CoA is converted to acetate and allowing the cell to dump the excess of acetylation potential in exchange for energy in the form of ATP. The main pathway for acetate production during exponential phase. This is Phosphate acetyltransferase (pta) from Escherichia coli (strain K12).